We begin with the raw amino-acid sequence, 420 residues long: Protein maelstrom homolog (420 aa).

A DNA-binding region (HMG box) is located at residues 4–73 (RRASRNAYYF…AQGKDSGPSE (70 aa)). 3 disordered regions span residues 62-94 (RAAQ…KQNV), 341-372 (GFSH…GQNS), and 392-420 (NIHK…SSLS). Polar residues-rich tracts occupy residues 344 to 358 (HFSS…NTPT) and 392 to 407 (NIHK…SPYT).

It belongs to the maelstrom family. As to quaternary structure, interacts with SMARCB1, SIN3B and DDX4. Interacts with piRNA-associated proteins TDRD1, PIWIL1 and PIWIL2. Interacts with TEX19.

The protein localises to the cytoplasm. The protein resides in the nucleus. Its function is as follows. Plays a central role during spermatogenesis by repressing transposable elements and preventing their mobilization, which is essential for the germline integrity. Acts via the piRNA metabolic process, which mediates the repression of transposable elements during meiosis by forming complexes composed of piRNAs and Piwi proteins and governs the methylation and subsequent repression of transposons. Its association with piP-bodies suggests a participation in the secondary piRNAs metabolic process. Required for the localization of germ-cell factors to the meiotic nuage. This chain is Protein maelstrom homolog (MAEL), found in Bos taurus (Bovine).